The sequence spans 445 residues: N-succinylarginine dihydrolase (445 aa).

Substrate is bound by residues 19–28 (AGLSYGNVAS), N110, and 137–138 (HR). E174 is an active-site residue. Substrate is bound at residue R214. The active site involves H250. Substrate contacts are provided by D252 and N363. C369 (nucleophile) is an active-site residue.

The protein belongs to the succinylarginine dihydrolase family. Homodimer.

The enzyme catalyses N(2)-succinyl-L-arginine + 2 H2O + 2 H(+) = N(2)-succinyl-L-ornithine + 2 NH4(+) + CO2. It participates in amino-acid degradation; L-arginine degradation via AST pathway; L-glutamate and succinate from L-arginine: step 2/5. Its function is as follows. Catalyzes the hydrolysis of N(2)-succinylarginine into N(2)-succinylornithine, ammonia and CO(2). This is N-succinylarginine dihydrolase from Aeromonas hydrophila subsp. hydrophila (strain ATCC 7966 / DSM 30187 / BCRC 13018 / CCUG 14551 / JCM 1027 / KCTC 2358 / NCIMB 9240 / NCTC 8049).